Here is a 536-residue protein sequence, read N- to C-terminus: MTEKGADGADGLTKAKSNAVSEDYETVNHVTGLKLAVIVTGLCLSVLLVALDNTIIATAIPKITDQFHALEDIGWYGSSYLLTICAFQLIFGKIYTFFPVKWVFLIAITIFEIGSAICGAAPNSTALIIGRAVAGIGSAGIFSGALIIIAYSIPLEKRPAYTGAIGGMYGIASVAGPLMGGAFTDHISWRWCFYINLPIGAVTILSILIFLKHPKQKLDNNQTWKARLLKLDPIGTAFFMPSIICLLLALQWGGTKYPWNNGRIIALFVVFAVLISGFIYFQIRGGDSATVPPRILKKRSIASGAFFLFTIGSAFFIMVYYLPIWFQAIKGASATSSGIMNIPMVLSLVVLSIASGITVTAIGYYAPLYYVSTVLTSIGAGLLTTFTTETSKGKWIGYQIIFGAGVGTGLQLSIIAAQAVLPLEDVAVGTVIMMFCQTLGGALFVSVGQNVFTNLLVKGVVNAAPGLDPQVVLRVGATQLKNMIPPQFLDGVQVAYNDALTKTWYVATALAALSVIGSVGMEWKSVKGKKIEPAAA.

The next 3 helical transmembrane spans lie at 30-50, 80-100, and 102-122; these read VTGLKLAVIVTGLCLSVLLVA, YLLTICAFQLIFGKIYTFFPV, and WVFLIAITIFEIGSAICGAAP. A glycan (N-linked (GlcNAc...) asparagine) is linked at Asn-123. 3 helical membrane-spanning segments follow: residues 133–153, 163–183, and 191–211; these read VAGIGSAGIFSGALIIIAYSI, GAIGGMYGIASVAGPLMGGAF, and WCFYINLPIGAVTILSILIFL. Asn-221 carries an N-linked (GlcNAc...) asparagine glycan. A run of 8 helical transmembrane segments spans residues 234 to 254, 264 to 284, 306 to 326, 342 to 362, 366 to 386, 400 to 420, 426 to 446, and 503 to 523; these read IGTAFFMPSIICLLLALQWGG, IIALFVVFAVLISGFIYFQIR, FFLFTIGSAFFIMVYYLPIWF, IPMVLSLVVLSIASGITVTAI, APLYYVSTVLTSIGAGLLTTF, IIFGAGVGTGLQLSIIAAQAV, VAVGTVIMMFCQTLGGALFVS, and TWYVATALAALSVIGSVGMEW.

This sequence belongs to the major facilitator superfamily. TCR/Tet family.

The protein localises to the cell membrane. In terms of biological role, MFS-type efflux pump involved in the modulation susceptibility to azoles, including fluconazole, itraconazole, ketoconazole, miconazole and voriconazole. Confers also increased resistance chloramphenicol and thiamphenicol, suggesting that it acts as a pleiotropic drug transporter with a broad substrate spectrum. Finally, increases the tolerance to cycloheximide when expressed in S.cerevisiae, but not in dermatophyte species. This Trichophyton rubrum (strain ATCC MYA-4607 / CBS 118892) (Athlete's foot fungus) protein is MFS-type efflux pump MFS1.